Consider the following 368-residue polypeptide: MTVTGIIAEFNPFHNGHKYLLETAEGLKIIAMSGNFMQRGEPALIDKWIRSEMALKNGADIVVELPFFVSVQSADYFAQGAIDILCQLGIQQLAFGTENVIDYQKLIKVYEKKSKQMTAYLSTLEDTLSYPQKTQKMWEIFAGVKFSGQTPNHILGLSYAKASAGKHIQLCPIKRQGAAYHSKDKNHLLASASAIRQHLNDWDFISHSVPNAGLLINNPHMSWDHYFSFLKYQILNHSDLTSIFQVNDELASRIKKAIKVSQNIDHLVDTVATKRYTKARVRRILIYILVNAKEPTLPKGIHILGFTSKGQAHLKKLKKSRPLITRIGAETWDEMTQKADSIYQLGHQDIPEQSFGRIPIIIKKERLN.

ATP-binding positions include 7–20, Gly-96, Asn-152, and Arg-175; that span reads IAEF…HKYL.

The protein belongs to the TmcAL family.

The protein resides in the cytoplasm. It carries out the reaction cytidine(34) in elongator tRNA(Met) + acetate + ATP = N(4)-acetylcytidine(34) in elongator tRNA(Met) + AMP + diphosphate. Its function is as follows. Catalyzes the formation of N(4)-acetylcytidine (ac(4)C) at the wobble position of elongator tRNA(Met), using acetate and ATP as substrates. First activates an acetate ion to form acetyladenylate (Ac-AMP) and then transfers the acetyl group to tRNA to form ac(4)C34. The sequence is that of tRNA(Met) cytidine acetate ligase from Streptococcus pyogenes serotype M4 (strain MGAS10750).